The chain runs to 338 residues: Lipoate-protein ligase A (338 aa).

The region spanning 29 to 216 (PATQRVLFLW…AFFAHYGERV (188 aa)) is the BPL/LPL catalytic domain. Residues Arg-71, 76–79 (GAVF), and Lys-134 contribute to the ATP site. Position 134 (Lys-134) interacts with (R)-lipoate.

This sequence belongs to the LplA family. In terms of assembly, monomer.

The protein localises to the cytoplasm. The enzyme catalyses L-lysyl-[lipoyl-carrier protein] + (R)-lipoate + ATP = N(6)-[(R)-lipoyl]-L-lysyl-[lipoyl-carrier protein] + AMP + diphosphate + H(+). Its pathway is protein modification; protein lipoylation via exogenous pathway; protein N(6)-(lipoyl)lysine from lipoate: step 1/2. It functions in the pathway protein modification; protein lipoylation via exogenous pathway; protein N(6)-(lipoyl)lysine from lipoate: step 2/2. Functionally, catalyzes both the ATP-dependent activation of exogenously supplied lipoate to lipoyl-AMP and the transfer of the activated lipoyl onto the lipoyl domains of lipoate-dependent enzymes. The sequence is that of Lipoate-protein ligase A from Escherichia coli O81 (strain ED1a).